The sequence spans 391 residues: Saxitoxin and tetrodotoxin-binding protein 1 (391 aa).

The signal sequence occupies residues 1-20 (MGAVPGVVLLLMLAVLGIRA). Tandem repeats lie at residues 24-202 (PEEC…HKKS) and 203-391 (PEEC…PEQD). N54, N63, N97, N234, N268, N277, and N307 each carry an N-linked (GlcNAc...) asparagine glycan.

Homodimer or heterodimer of PSTBP1 and PSTBP2. Glycosylated.

It is found in the secreted. Functionally, binds both saxitoxin and tetradotoxin. May play a role in toxin accumulation and/or excretion. The sequence is that of Saxitoxin and tetrodotoxin-binding protein 1 (psbp1) from Takifugu pardalis (Panther puffer).